A 152-amino-acid polypeptide reads, in one-letter code: Probable ribose-5-phosphate isomerase B (152 aa).

Residue 10–11 coordinates D-ribulose 5-phosphate; the sequence is DH. Catalysis depends on C69, which acts as the Proton acceptor. 70–74 lines the D-ribulose 5-phosphate pocket; the sequence is GTGVG. H102 acts as the Proton donor in catalysis. D-ribulose 5-phosphate contacts are provided by D103, R113, R136, and R140.

It belongs to the LacAB/RpiB family. Homodimer.

The enzyme catalyses aldehydo-D-ribose 5-phosphate = D-ribulose 5-phosphate. It participates in carbohydrate degradation; pentose phosphate pathway; D-ribose 5-phosphate from D-ribulose 5-phosphate (non-oxidative stage): step 1/1. In terms of biological role, catalyzes the interconversion of ribulose-5-P and ribose-5-P. The protein is Probable ribose-5-phosphate isomerase B of Mycoplasma genitalium (strain ATCC 33530 / DSM 19775 / NCTC 10195 / G37) (Mycoplasmoides genitalium).